The following is a 385-amino-acid chain: Meiotic recombination protein SPO11-2 (385 aa).

Residues 24–169 enclose the Topo IIA-type catalytic domain; the sequence is LPPAEVRARI…LGIMASSRGA (146 aa). Residue Y126 is the O-(5'-phospho-DNA)-tyrosine intermediate of the active site. Residues E219 and D272 each contribute to the Mg(2+) site.

Belongs to the TOP6A family. In terms of assembly, interacts with TOP6B. It depends on Mg(2+) as a cofactor.

It is found in the nucleus. It catalyses the reaction ATP-dependent breakage, passage and rejoining of double-stranded DNA.. In terms of biological role, required for meiotic recombination. Mediates DNA cleavage that forms the double-strand breaks (DSB) that initiate meiotic recombination. This Oryza sativa subsp. japonica (Rice) protein is Meiotic recombination protein SPO11-2 (SPO11-2).